The chain runs to 126 residues: Aspartate 1-decarboxylase (126 aa).

The active-site Schiff-base intermediate with substrate; via pyruvic acid is the serine 25. Serine 25 carries the pyruvic acid (Ser) modification. Threonine 57 is a substrate binding site. Catalysis depends on tyrosine 58, which acts as the Proton donor. Position 73–75 (73–75) interacts with substrate; sequence GGA.

The protein belongs to the PanD family. As to quaternary structure, heterooctamer of four alpha and four beta subunits. Pyruvate serves as cofactor. Post-translationally, is synthesized initially as an inactive proenzyme, which is activated by self-cleavage at a specific serine bond to produce a beta-subunit with a hydroxyl group at its C-terminus and an alpha-subunit with a pyruvoyl group at its N-terminus.

The protein resides in the cytoplasm. It carries out the reaction L-aspartate + H(+) = beta-alanine + CO2. It functions in the pathway cofactor biosynthesis; (R)-pantothenate biosynthesis; beta-alanine from L-aspartate: step 1/1. In terms of biological role, catalyzes the pyruvoyl-dependent decarboxylation of aspartate to produce beta-alanine. This Acinetobacter baumannii (strain AB307-0294) protein is Aspartate 1-decarboxylase.